The following is an 85-amino-acid chain: Putative membrane protein insertion efficiency factor (85 aa).

The protein belongs to the UPF0161 family.

It is found in the cell inner membrane. Could be involved in insertion of integral membrane proteins into the membrane. This is Putative membrane protein insertion efficiency factor from Enterobacter sp. (strain 638).